Reading from the N-terminus, the 543-residue chain is Chaperonin GroEL (543 aa).

Residues 29–32 (TVGP), 86–90 (DGTTT), Gly-413, and Asp-504 each bind ATP.

The protein belongs to the chaperonin (HSP60) family. In terms of assembly, forms a cylinder of 14 subunits composed of two heptameric rings stacked back-to-back. Interacts with the co-chaperonin GroES.

It localises to the cytoplasm. The catalysed reaction is ATP + H2O + a folded polypeptide = ADP + phosphate + an unfolded polypeptide.. In terms of biological role, together with its co-chaperonin GroES, plays an essential role in assisting protein folding. The GroEL-GroES system forms a nano-cage that allows encapsulation of the non-native substrate proteins and provides a physical environment optimized to promote and accelerate protein folding. This Mycoplasma genitalium (strain ATCC 33530 / DSM 19775 / NCTC 10195 / G37) (Mycoplasmoides genitalium) protein is Chaperonin GroEL.